A 274-amino-acid chain; its full sequence is Isoprenyl transferase (274 aa).

Residue aspartate 49 is part of the active site. Aspartate 49 lines the Mg(2+) pocket. Substrate is bound by residues glycine 50–arginine 53, phenylalanine 54, arginine 62, histidine 66, and serine 94–aspartate 96. The Proton acceptor role is filled by asparagine 97. Substrate-binding positions include arginine 100, arginine 223, and arginine 229–serine 231. Glutamate 242 provides a ligand contact to Mg(2+).

Belongs to the UPP synthase family. As to quaternary structure, homodimer. The cofactor is Mg(2+).

Catalyzes the condensation of isopentenyl diphosphate (IPP) with allylic pyrophosphates generating different type of terpenoids. The sequence is that of Isoprenyl transferase from Deinococcus radiodurans (strain ATCC 13939 / DSM 20539 / JCM 16871 / CCUG 27074 / LMG 4051 / NBRC 15346 / NCIMB 9279 / VKM B-1422 / R1).